Consider the following 274-residue polypeptide: Large ribosomal subunit protein uL2cy (274 aa).

Disordered stretches follow at residues 1–25 and 223–274; these read MAIH…VKSN and MNPV…RRSK. The span at 7–25 shows a compositional bias: polar residues; that stretch reads KTSTPSTRNGTVDSQVKSN.

This sequence belongs to the universal ribosomal protein uL2 family. Part of the 50S ribosomal subunit.

The protein resides in the plastid. The protein localises to the chloroplast. The chain is Large ribosomal subunit protein uL2cy (rpl2-B) from Atropa belladonna (Belladonna).